A 488-amino-acid chain; its full sequence is MQTLNRRNFPGRQHPDRVIQFGEGNFLRAFVDWQLDLLNEHTDLDAGIVIVRPIDSDFPPALDTQDGLYTTIIRGLNEQGEAVREPRLIRSVNREINVYRQFDEYLALAHDPNIRFVFSNTTEAGISYHADDRLSDAPPVSFPAKLTRLLYERFCHFDGAADKGWVLLPCELIDYNGVALKELVLRYAAQWELTSTFTAWLNDHNTFCSTLVDRIVTGYPRAEVEALQQEMGYQDTFWDTAEHFYLFVIQGPLWLAEELRLNKLDLNVRIVDDIKPYKERKVAILNGAHTALVPVAFLAGLDTVGESMNDALIGKFVEKTIAEEIVPVLDLPHDELTSFAQAVLSRFRNPFIQHQLLSISLNGMTKFRTRILPQLLTYRERHGELPARLTFALAALIAFYRGERSGEGDALQAYPLQDDAHWLERYSTLWAGVKENTVSLAELVNVVLRDADHWEQDLTQVPGLAAQVTEQLQTIVERGMRAAVEGYC.

Position 18–29 (18–29 (VIQFGEGNFLRA)) interacts with NAD(+).

This sequence belongs to the mannitol dehydrogenase family. UxaB subfamily.

It carries out the reaction D-altronate + NAD(+) = keto-D-tagaturonate + NADH + H(+). The protein operates within carbohydrate metabolism; pentose and glucuronate interconversion. In Pectobacterium atrosepticum (strain SCRI 1043 / ATCC BAA-672) (Erwinia carotovora subsp. atroseptica), this protein is Altronate oxidoreductase.